A 101-amino-acid polypeptide reads, in one-letter code: Phosphoribosyl-AMP cyclohydrolase (101 aa).

Residue D71 participates in Mg(2+) binding. Residue C72 participates in Zn(2+) binding. D73 and D75 together coordinate Mg(2+). Zn(2+) contacts are provided by C88 and C95.

It belongs to the PRA-CH family. In terms of assembly, homodimer. Requires Mg(2+) as cofactor. Zn(2+) serves as cofactor.

Its subcellular location is the cytoplasm. The catalysed reaction is 1-(5-phospho-beta-D-ribosyl)-5'-AMP + H2O = 1-(5-phospho-beta-D-ribosyl)-5-[(5-phospho-beta-D-ribosylamino)methylideneamino]imidazole-4-carboxamide. It functions in the pathway amino-acid biosynthesis; L-histidine biosynthesis; L-histidine from 5-phospho-alpha-D-ribose 1-diphosphate: step 3/9. Functionally, catalyzes the hydrolysis of the adenine ring of phosphoribosyl-AMP. In Bacillus cytotoxicus (strain DSM 22905 / CIP 110041 / 391-98 / NVH 391-98), this protein is Phosphoribosyl-AMP cyclohydrolase.